The following is a 358-amino-acid chain: Putative UDP-kanosamine synthase oxidoreductase subunit (358 aa).

In terms of assembly, interacts with RifK.

It catalyses the reaction UDP-alpha-D-glucose + NAD(+) = UDP-3-oxo-alpha-D-glucose + NADH + H(+). It functions in the pathway antibiotic biosynthesis; rifamycin B biosynthesis. Its function is as follows. In a complex with RifK, RifL may catalyze the oxidation of UDP-glucose to UDP-3-keto-D-glucose, which would then be used by RifK to produce UDP-kanosamine. Is not able to use dTDP-glucose as substrate. This is Putative UDP-kanosamine synthase oxidoreductase subunit (rifL) from Amycolatopsis mediterranei (strain S699) (Nocardia mediterranei).